Consider the following 32-residue polypeptide: Ranatuerin-3 (32 aa).

Cysteines 23 and 28 form a disulfide.

It belongs to the frog skin active peptide (FSAP) family. Ranatuerin subfamily. As to expression, expressed by the skin glands.

Its subcellular location is the secreted. Its function is as follows. Antibacterial activity against Gram-positive bacterium S.aureus (MIC=60 uM). Shows no detectable hemolytic activity towards human erythrocytes. In Aquarana catesbeiana (American bullfrog), this protein is Ranatuerin-3.